Reading from the N-terminus, the 420-residue chain is MKNYKAIGKIGEGTFSEVMKMQSLRDGNYYACKQMKQHFESIEQVNSLREIQALRRLNPHPNILALHEVVFDRKSGSLALICELMDMNIYELIRGRRHPLSEKKIMLYMYQLCKSLDHMHRNGIFHRDVKPENILVKQDVLKLGDFGSCRSVYSKQPYTEYISTRWYRAPECLLTDGFYTYKMDLWSAGCVFYEIASLQPLFPGVNELDQISKIHDVIGTPCQKTLTKFKQSRAMSFDFPFKKGSGIPLLTANLSPQCLSLLHAMVAYDPDERIAAHQALQHPYFQVQRAAETQTLAKHRRAFCPKFSMVPESSSHNWSFSQEGRKQKQSLRHEEGHARRQGPTSLMELPKLRLSGMTKLSSCSSPALRSVLGTGANGKVPVLRPLKCAAVNKKTDTQKDIKPHLKHYHLPTINRKGGEY.

The 282-residue stretch at 4-285 (YKAIGKIGEG…AHQALQHPYF (282 aa)) folds into the Protein kinase domain. ATP is bound by residues 10 to 18 (IGEGTFSEV) and K33. D128 acts as the Proton acceptor in catalysis. Positions 311–322 (PESSSHNWSFSQ) are enriched in polar residues. The interval 311–344 (PESSSHNWSFSQEGRKQKQSLRHEEGHARRQGPT) is disordered. A compositionally biased stretch (basic and acidic residues) spans 323–338 (EGRKQKQSLRHEEGHA).

This sequence belongs to the protein kinase superfamily. CMGC Ser/Thr protein kinase family. CDC2/CDKX subfamily. The cofactor is Mg(2+). In terms of processing, autophosphorylated. Highly expressed in testis, and less in kidney, brain and lung.

The protein localises to the cytoplasm. The protein resides in the cell projection. It localises to the cilium. Its subcellular location is the nucleus. The catalysed reaction is L-seryl-[protein] + ATP = O-phospho-L-seryl-[protein] + ADP + H(+). It carries out the reaction L-threonyl-[protein] + ATP = O-phospho-L-threonyl-[protein] + ADP + H(+). With respect to regulation, phosphorylation appears to increase the enzymatic activity. Able to phosphorylate several exogenous substrates and to undergo autophosphorylation. Negatively regulates cilium length in a cAMP and mTORC1 signaling-dependent manner. This chain is MAPK/MAK/MRK overlapping kinase (Mok), found in Mus musculus (Mouse).